We begin with the raw amino-acid sequence, 349 residues long: Sensory histidine kinase/phosphatase NtrB (349 aa).

Residues 5-78 enclose the PAS domain; sequence IQPDAGQILN…SLAAGQGFTD (74 aa). Residues 136–349 enclose the Histidine kinase domain; the sequence is GLAHEIKNPL…EFSVYLPIRK (214 aa). His-139 bears the Phosphohistidine; by autocatalysis mark. Lys-329 serves as a coordination point for ATP.

In terms of processing, autophosphorylated.

The protein localises to the cytoplasm. The enzyme catalyses ATP + protein L-histidine = ADP + protein N-phospho-L-histidine.. In terms of biological role, member of the two-component regulatory system NtrB/NtrC, which controls expression of the nitrogen-regulated (ntr) genes in response to nitrogen limitation. Under conditions of nitrogen limitation, NtrB autophosphorylates and transfers the phosphoryl group to NtrC. In the presence of nitrogen, acts as a phosphatase that dephosphorylates and inactivates NtrC. This is Sensory histidine kinase/phosphatase NtrB (glnL) from Salmonella typhi.